We begin with the raw amino-acid sequence, 321 residues long: F-box protein At4g35930 (321 aa).

Residues 1–13 show a composition bias toward basic and acidic residues; the sequence is MGKVSPKDLDSKT. Residues 1–23 are disordered; the sequence is MGKVSPKDLDSKTSVRKKKLKSS. In terms of domain architecture, F-box spans 159–207; the sequence is ESQLESLPMDLLVKIVCHLHHDQLKAVFHVSQRIRMATILARQYHFNYT. Residues 228–258 form a disordered region; sequence WPFRRGDGNPTMVSSPHTPKAPKHAPRPPSR.

This Arabidopsis thaliana (Mouse-ear cress) protein is F-box protein At4g35930.